The following is a 568-amino-acid chain: 2-succinyl-5-enolpyruvyl-6-hydroxy-3-cyclohexene-1-carboxylate synthase (568 aa).

Belongs to the TPP enzyme family. MenD subfamily. In terms of assembly, homodimer. The cofactor is Mg(2+). Mn(2+) is required as a cofactor. Requires thiamine diphosphate as cofactor.

The catalysed reaction is isochorismate + 2-oxoglutarate + H(+) = 5-enolpyruvoyl-6-hydroxy-2-succinyl-cyclohex-3-ene-1-carboxylate + CO2. It participates in quinol/quinone metabolism; 1,4-dihydroxy-2-naphthoate biosynthesis; 1,4-dihydroxy-2-naphthoate from chorismate: step 2/7. It functions in the pathway quinol/quinone metabolism; menaquinone biosynthesis. Functionally, catalyzes the thiamine diphosphate-dependent decarboxylation of 2-oxoglutarate and the subsequent addition of the resulting succinic semialdehyde-thiamine pyrophosphate anion to isochorismate to yield 2-succinyl-5-enolpyruvyl-6-hydroxy-3-cyclohexene-1-carboxylate (SEPHCHC). This is 2-succinyl-5-enolpyruvyl-6-hydroxy-3-cyclohexene-1-carboxylate synthase from Pasteurella multocida (strain Pm70).